A 765-amino-acid polypeptide reads, in one-letter code: MRIDVESQNINVTSLKEAPIHLSGQIQPHGVLLVLEEPGLKILQVSNNTWGILGINAENILQKKLEDLLDSFQIERIQSGLSSGNLEFINPTKIWIRKKGDDYAVFDAVFHRNTEGFLILELEPAITQENIPFLSFYHLAKASINQLQKTANLRDFCQIIVQEVRKVTDFDRVMLYKFDDDGHGSVIAEEKLDSLEPYLGLHYPESDIPKPARKLFISNSIRVIPNAQAQAIQMIPALNPVSDRPVDLTNSILRSAANCHLEYLHNMGVGASLTISLIKDNKLWGLIACHHLSAKYVSYELRKACEFLGRVIFAEISAREETEDYDYRMNLTHIQSLLVEYMSQEDNFVDGLIKHQPSLLDLTSAQGAAVCFGDHCTLIGETPKAEDLVFLVQWLKNNVEEEVFYTDSLPQVYPDAERYKNVASGLLAIPISQRNYVLWFRPEVIQTVNWGGDPNQPFEVNKLDGNVRLCPRKSFELWKETVRLTSLPWRYVEIRAALELRKAIVNIVLRQADELAQLAHDLERSNAELKKFAYVASHDLQEPLNQVANYVQLLEMRYQDQLDADANEFITFAVEGVSLMQTLIDDVLAYSKVDTQAIAFQLTEVEKALDKALGNLRQRIAETGANITHDPLPTVMAGSTQLMQLFQNLIANAIKFRSEEAPQIHIGAERLEDEWLFSVRDNGIGIDPQFSDRIFVIFQRLHTRDEYHGTGMGLAICKKIIECHRGRIWVESQLGEGATFYFTIPVGGRERERRNGRKTQNNLFS.

Residues 20–510 are chromophore binding domain; it reads IHLSGQIQPH…RKAIVNIVLR (491 aa). One can recognise a GAF domain in the interval 152-320; sequence NLRDFCQIIV…VIFAEISARE (169 aa). Residue Cys259 coordinates a tetrapyrrole. The Histidine kinase domain occupies 535–748; sequence VASHDLQEPL…TFYFTIPVGG (214 aa). His538 carries the post-translational modification Phosphohistidine; by autocatalysis.

It in the N-terminal section; belongs to the phytochrome family. Contains one covalently linked tetrapyrrole chromophore.

It catalyses the reaction ATP + protein L-histidine = ADP + protein N-phospho-L-histidine.. In terms of biological role, photoreceptor which exists in two forms that are reversibly interconvertible by light: the R form that absorbs maximally in the red region of the spectrum and the FR form that absorbs maximally in the far-red region. The protein is Cyanobacterial phytochrome A (aphA) of Nostoc sp. (strain PCC 7120 / SAG 25.82 / UTEX 2576).